Consider the following 270-residue polypeptide: Large ribosomal subunit protein bL21m (270 aa).

The transit peptide at 1–68 (MASLRCFREL…HWYRSQDRCF (68 aa)) directs the protein to the mitochondrion. Positions 68–113 (FSSNTKDTDEDEESSEGEDDDEEEGEDFEDSADMEVEREYSPAEKV) are disordered. The segment covering 75–101 (TDEDEESSEGEDDDEEEGEDFEDSADM) has biased composition (acidic residues). Residues 102–113 (EVEREYSPAEKV) are compositionally biased toward basic and acidic residues.

This sequence belongs to the bacterial ribosomal protein bL21 family. In terms of assembly, component of the mitochondrial ribosome large subunit. As to expression, constitutively expressed in roots, stems, leaves, flowers, pistils and siliques.

It is found in the mitochondrion. Its function is as follows. This protein binds to 23S ribosomal RNA in the presence of protein L20. Required for karyogamy during female gametophyte development, when the two polar nuclei fuse to form the diploid central cell nucleus, and during double fertilization of the egg cell and the central cell. This Arabidopsis thaliana (Mouse-ear cress) protein is Large ribosomal subunit protein bL21m.